The following is a 214-amino-acid chain: Adenylate kinase (214 aa).

10-15 (GAGKGT) is a binding site for ATP. The tract at residues 30–59 (STGDMLRAAIKAGTELGLEAKRVMDEGKLV) is NMP. Residues Thr-31, Arg-36, 57–59 (KLV), 85–88 (GFPR), and Gln-92 each bind AMP. The tract at residues 122–159 (GRRVHPASGRVYHVVYNPPKVEGKDNETGDDLIVRDDD) is LID. ATP contacts are provided by residues Arg-123 and 132–133 (VY). 2 residues coordinate AMP: Arg-156 and Arg-167. Arg-200 is a binding site for ATP.

Belongs to the adenylate kinase family. Monomer.

It localises to the cytoplasm. It catalyses the reaction AMP + ATP = 2 ADP. It participates in purine metabolism; AMP biosynthesis via salvage pathway; AMP from ADP: step 1/1. In terms of biological role, catalyzes the reversible transfer of the terminal phosphate group between ATP and AMP. Plays an important role in cellular energy homeostasis and in adenine nucleotide metabolism. This chain is Adenylate kinase, found in Alteromonas mediterranea (strain DSM 17117 / CIP 110805 / LMG 28347 / Deep ecotype).